The sequence spans 338 residues: tRNA pseudouridine synthase D (338 aa).

The active-site Nucleophile is the Asp-79. The 150-residue stretch at 154 to 303 (GVPNYFGEQR…EEAWRANILY (150 aa)) folds into the TRUD domain.

Belongs to the pseudouridine synthase TruD family.

It carries out the reaction uridine(13) in tRNA = pseudouridine(13) in tRNA. Functionally, responsible for synthesis of pseudouridine from uracil-13 in transfer RNAs. The sequence is that of tRNA pseudouridine synthase D from Legionella pneumophila (strain Lens).